Consider the following 312-residue polypeptide: Olfactory receptor 5J2 (312 aa).

At 1-25 the chain is on the extracellular side; that stretch reads MADDNFTVVTEFILLGLTDHAELKA. A glycan (N-linked (GlcNAc...) asparagine) is linked at Asn5. The chain crosses the membrane as a helical span at residues 26-46; that stretch reads VLFVVFLVIYAITLLRNLGMI. Topologically, residues 47–54 are cytoplasmic; it reads LLIQITSK. A helical membrane pass occupies residues 55–75; the sequence is LHTPMYFLLSCLSFVDACYSS. Topologically, residues 76–99 are extracellular; that stretch reads AIAPKMLVNLLVVKATISFSACMV. Cysteines 97 and 189 form a disulfide. A helical membrane pass occupies residues 100–120; sequence QHLCFGVFITTEGFLLSVMAY. Topologically, residues 121–139 are cytoplasmic; it reads DRYVAIVSPLLYTVAMSDR. Residues 140 to 160 traverse the membrane as a helical segment; that stretch reads KCVELVTGSWIGGIVNTLIHT. The Extracellular portion of the chain corresponds to 161 to 196; sequence ISLRRLSFCRLNAVSHFFCDIPSLLKLSCSDTSMNE. The chain crosses the membrane as a helical span at residues 197 to 217; sequence LLLLTFSGVIAMATFLTVIIS. Topologically, residues 218-237 are cytoplasmic; that stretch reads YIFIAFASLRIHSASGRQQA. A helical transmembrane segment spans residues 238–258; the sequence is FSTCASHLTAVTIFYGTLIFS. Over 259–271 the chain is Extracellular; that stretch reads YIQPSSQYFVEQE. Residues 272 to 292 traverse the membrane as a helical segment; the sequence is KVVSMFYTLGIPMLNLLIHSL. Residues 293–312 are Cytoplasmic-facing; the sequence is RNKDVKEAVKRAIEMKHFLC.

This sequence belongs to the G-protein coupled receptor 1 family.

Its subcellular location is the cell membrane. Its function is as follows. Odorant receptor. This is Olfactory receptor 5J2 (OR5J2) from Homo sapiens (Human).